Reading from the N-terminus, the 189-residue chain is UPF0312 protein VC0395_0473/VC395_A0785 (189 aa).

Positions 1 to 22 (MKKTLMAVGLAAVISIPFAANA) are cleaved as a signal peptide.

This sequence belongs to the UPF0312 family. Type 1 subfamily.

It localises to the periplasm. This chain is UPF0312 protein VC0395_0473/VC395_A0785, found in Vibrio cholerae serotype O1 (strain ATCC 39541 / Classical Ogawa 395 / O395).